Reading from the N-terminus, the 252-residue chain is Ferritin-2, chloroplastic (252 aa).

The transit peptide at 1–43 (MMLRVSSSPAAAVANHLSGGAAATTAPARVTAQRSGVSLSAAA) directs the protein to the chloroplast. Residues 44–80 (AAGKGKEVLSGVVFQPFEEIKGELALVPQSPDRSLAR) are extension peptide (EP). The Ferritin-like diiron domain maps to 81 to 234 (HKFVDDCEAA…KYVAQLRRVG (154 aa)). 5 residues coordinate Fe cation: E98, E133, H136, E182, and Q216.

Belongs to the ferritin family. In terms of assembly, oligomer of 24 subunits. There are two types of subunits: L (light) chain and H (heavy) chain. The major chain can be light or heavy, depending on the species and tissue type. The functional molecule forms a roughly spherical shell with a diameter of 12 nm and contains a central cavity into which the insoluble mineral iron core is deposited. Ferritins accumulate in seed during maturation. Then, they are degraded during the first days of germination. Present in roots and leaves after iron treatment.

It is found in the plastid. Its subcellular location is the chloroplast. The enzyme catalyses 4 Fe(2+) + O2 + 4 H(+) = 4 Fe(3+) + 2 H2O. In terms of biological role, stores iron in a soluble, non-toxic, readily available form. Important for iron homeostasis. Has ferroxidase activity. Iron is taken up in the ferrous form and deposited as ferric hydroxides after oxidation. The sequence is that of Ferritin-2, chloroplastic (FER2) from Zea mays (Maize).